A 507-amino-acid chain; its full sequence is DNA ligase B (507 aa).

Positions 1–172 are not required for adenylyltransferase activity, required for nick joining; the sequence is MLLHDVAITS…AAAAGLSGAA (172 aa). Residue Glu-209 coordinates ATP. Residue Lys-211 is the N6-AMP-lysine intermediate of the active site. 6 residues coordinate ATP: Arg-216, Arg-231, Glu-260, Phe-300, Arg-372, and Lys-378.

Belongs to the ATP-dependent DNA ligase family. As to quaternary structure, monomer. Mg(2+) serves as cofactor.

It catalyses the reaction ATP + (deoxyribonucleotide)n-3'-hydroxyl + 5'-phospho-(deoxyribonucleotide)m = (deoxyribonucleotide)n+m + AMP + diphosphate.. DNA ligase that seals nicks in double-stranded DNA during DNA replication, DNA recombination and DNA repair. The polypeptide is DNA ligase B (ligB) (Mycobacterium tuberculosis (strain ATCC 25618 / H37Rv)).